Reading from the N-terminus, the 310-residue chain is MTALPQDTDWTADASRPAQARIEREAHKLEKRLCREVGRAIVDYRMIEEGDKVMVCMSGGKDSYTLLDILIKLQKRAPIHFDLVAVNLDQKQPGFPEHILPEYLAATGVPFHIENQDTYSIVKRVVPEGKTTCGLCSRLRRGILYRVADELGCTKIALGHHRDDILQTLLLNMFFGGKMKAMPPKLVSDDGRHVVIRPLAYVPEKDTTRWAQQRQFPIIPCNLCGSQENLQRKQVGEMLRDWDKRFPGRVDNMFNALQNIVPSHLMDGTLHDFQHLKATGIASDDGDKAFDAEEFPPAPALPGLQVVQIS.

A PP-loop motif motif is present at residues Ser-58–Ser-63. Residues Cys-133, Cys-136, and Cys-224 each coordinate [4Fe-4S] cluster.

This sequence belongs to the TtcA family. In terms of assembly, homodimer. Requires Mg(2+) as cofactor. [4Fe-4S] cluster is required as a cofactor.

It is found in the cytoplasm. It catalyses the reaction cytidine(32) in tRNA + S-sulfanyl-L-cysteinyl-[cysteine desulfurase] + AH2 + ATP = 2-thiocytidine(32) in tRNA + L-cysteinyl-[cysteine desulfurase] + A + AMP + diphosphate + H(+). Its pathway is tRNA modification. Catalyzes the ATP-dependent 2-thiolation of cytidine in position 32 of tRNA, to form 2-thiocytidine (s(2)C32). The sulfur atoms are provided by the cysteine/cysteine desulfurase (IscS) system. This chain is tRNA-cytidine(32) 2-sulfurtransferase, found in Paracidovorax citrulli (strain AAC00-1) (Acidovorax citrulli).